We begin with the raw amino-acid sequence, 328 residues long: uncharacterized protein (328 aa).

The G-patch domain occupies 10-55; the sequence is KMGFGHAMLLKMGWKGKGLGVEEDGRTEIIVNKKKQDKVGVGASIS. The tract at residues 97 to 291 is disordered; it reads EKITFKRTIK…KKSFSVSKTR (195 aa). Over residues 101–110 the composition is skewed to basic residues; it reads FKRTIKKNSK. Over residues 116–126 the composition is skewed to acidic residues; sequence SDSDSDSDSES. 2 stretches are compositionally biased toward low complexity: residues 141 to 158 and 210 to 240; these read DSDS…SSSS and SSSS…SSSE. The segment covering 248–257 has biased composition (basic residues); that stretch reads KNKNKNKNKK.

This is an uncharacterized protein from Dictyostelium discoideum (Social amoeba).